The chain runs to 599 residues: UvrABC system protein C (599 aa).

Positions 13–91 (NLPGVYRMIN…IKGFMPRYNV (79 aa)) constitute a GIY-YIG domain. In terms of domain architecture, UVR spans 200-235 (QQVMDELGEKMNEAAEKMEYELAAVYRDRIQSLRQV).

This sequence belongs to the UvrC family. In terms of assembly, interacts with UvrB in an incision complex.

The protein resides in the cytoplasm. The UvrABC repair system catalyzes the recognition and processing of DNA lesions. UvrC both incises the 5' and 3' sides of the lesion. The N-terminal half is responsible for the 3' incision and the C-terminal half is responsible for the 5' incision. In Methylobacillus flagellatus (strain ATCC 51484 / DSM 6875 / VKM B-1610 / KT), this protein is UvrABC system protein C.